We begin with the raw amino-acid sequence, 329 residues long: Acetyl-coenzyme A carboxylase carboxyl transferase subunit alpha (329 aa).

The CoA carboxyltransferase C-terminal domain occupies 40-294; the sequence is QLETLAARRR…REAIERHLDE (255 aa).

The protein belongs to the AccA family. As to quaternary structure, acetyl-CoA carboxylase is a heterohexamer composed of biotin carboxyl carrier protein (AccB), biotin carboxylase (AccC) and two subunits each of ACCase subunit alpha (AccA) and ACCase subunit beta (AccD).

The protein resides in the cytoplasm. It carries out the reaction N(6)-carboxybiotinyl-L-lysyl-[protein] + acetyl-CoA = N(6)-biotinyl-L-lysyl-[protein] + malonyl-CoA. It functions in the pathway lipid metabolism; malonyl-CoA biosynthesis; malonyl-CoA from acetyl-CoA: step 1/1. Component of the acetyl coenzyme A carboxylase (ACC) complex. First, biotin carboxylase catalyzes the carboxylation of biotin on its carrier protein (BCCP) and then the CO(2) group is transferred by the carboxyltransferase to acetyl-CoA to form malonyl-CoA. The polypeptide is Acetyl-coenzyme A carboxylase carboxyl transferase subunit alpha (Prochlorococcus marinus (strain MIT 9313)).